A 384-amino-acid chain; its full sequence is 5-amino-6-(D-ribitylamino)uracil--L-tyrosine 4-hydroxyphenyl transferase 2 (384 aa).

The Radical SAM core domain maps to 53 to 286 (VSYVVNRNIY…IAISRVILHT (234 aa)). [4Fe-4S] cluster contacts are provided by cysteine 67, cysteine 71, and cysteine 74.

Belongs to the radical SAM superfamily. CofH family. As to quaternary structure, consists of two subunits, CofG and CofH. It depends on [4Fe-4S] cluster as a cofactor.

It catalyses the reaction 5-amino-6-(D-ribitylamino)uracil + L-tyrosine + S-adenosyl-L-methionine = 5-amino-5-(4-hydroxybenzyl)-6-(D-ribitylimino)-5,6-dihydrouracil + 2-iminoacetate + 5'-deoxyadenosine + L-methionine + H(+). The protein operates within cofactor biosynthesis; coenzyme F0 biosynthesis. Functionally, catalyzes the radical-mediated synthesis of 5-amino-5-(4-hydroxybenzyl)-6-(D-ribitylimino)-5,6-dihydrouracil from 5-amino-6-(D-ribitylamino)uracil and L-tyrosine. The polypeptide is 5-amino-6-(D-ribitylamino)uracil--L-tyrosine 4-hydroxyphenyl transferase 2 (Methanosarcina barkeri (strain Fusaro / DSM 804)).